We begin with the raw amino-acid sequence, 431 residues long: Adenylosuccinate synthetase (431 aa).

Residues 13 to 19 and 41 to 43 each bind GTP; these read GDEGKGK and GHT. The active-site Proton acceptor is the D14. D14 and G41 together coordinate Mg(2+). IMP contacts are provided by residues 14–17, 39–42, T130, R144, Q225, T240, and R304; these read DEGK and NAGH. H42 (proton donor) is an active-site residue. 300–306 is a substrate binding site; that stretch reads ATTGRAR. GTP-binding positions include R306, 332–334, and 414–416; these read KLD and STG.

Belongs to the adenylosuccinate synthetase family. In terms of assembly, homodimer. Mg(2+) serves as cofactor.

Its subcellular location is the cytoplasm. The catalysed reaction is IMP + L-aspartate + GTP = N(6)-(1,2-dicarboxyethyl)-AMP + GDP + phosphate + 2 H(+). It functions in the pathway purine metabolism; AMP biosynthesis via de novo pathway; AMP from IMP: step 1/2. In terms of biological role, plays an important role in the de novo pathway of purine nucleotide biosynthesis. Catalyzes the first committed step in the biosynthesis of AMP from IMP. The polypeptide is Adenylosuccinate synthetase (Chromohalobacter salexigens (strain ATCC BAA-138 / DSM 3043 / CIP 106854 / NCIMB 13768 / 1H11)).